The sequence spans 384 residues: 23S rRNA (uracil(747)-C(5))-methyltransferase RlmC (384 aa).

[4Fe-4S] cluster is bound by residues cysteine 3, cysteine 11, cysteine 14, and cysteine 87. Glutamine 212, phenylalanine 241, glutamate 262, and asparagine 309 together coordinate S-adenosyl-L-methionine. Cysteine 336 functions as the Nucleophile in the catalytic mechanism.

The protein belongs to the class I-like SAM-binding methyltransferase superfamily. RNA M5U methyltransferase family. RlmC subfamily.

It carries out the reaction uridine(747) in 23S rRNA + S-adenosyl-L-methionine = 5-methyluridine(747) in 23S rRNA + S-adenosyl-L-homocysteine + H(+). In terms of biological role, catalyzes the formation of 5-methyl-uridine at position 747 (m5U747) in 23S rRNA. This Shewanella amazonensis (strain ATCC BAA-1098 / SB2B) protein is 23S rRNA (uracil(747)-C(5))-methyltransferase RlmC.